Here is a 421-residue protein sequence, read N- to C-terminus: Serine--tRNA ligase (421 aa).

225-227 (TAE) is an L-serine binding site. ATP-binding positions include 256-258 (RSE) and Val-272. Position 279 (Glu-279) interacts with L-serine. 345 to 348 (ETHS) contributes to the ATP binding site. Thr-380 contributes to the L-serine binding site.

This sequence belongs to the class-II aminoacyl-tRNA synthetase family. Type-1 seryl-tRNA synthetase subfamily. In terms of assembly, homodimer. A single tRNA molecule binds across the dimer.

The protein localises to the cytoplasm. The catalysed reaction is tRNA(Ser) + L-serine + ATP = L-seryl-tRNA(Ser) + AMP + diphosphate + H(+). It catalyses the reaction tRNA(Sec) + L-serine + ATP = L-seryl-tRNA(Sec) + AMP + diphosphate + H(+). Its pathway is aminoacyl-tRNA biosynthesis; selenocysteinyl-tRNA(Sec) biosynthesis; L-seryl-tRNA(Sec) from L-serine and tRNA(Sec): step 1/1. In terms of biological role, catalyzes the attachment of serine to tRNA(Ser). Is also probably able to aminoacylate tRNA(Sec) with serine, to form the misacylated tRNA L-seryl-tRNA(Sec), which will be further converted into selenocysteinyl-tRNA(Sec). The protein is Serine--tRNA ligase (serS) of Thermus thermophilus (strain ATCC BAA-163 / DSM 7039 / HB27).